The chain runs to 606 residues: Glutamine--fructose-6-phosphate aminotransferase [isomerizing] (606 aa).

Cysteine 2 (nucleophile; for GATase activity) is an active-site residue. A Glutamine amidotransferase type-2 domain is found at 2 to 217 (CGIVGMVGEN…DGDVMVLRKD (216 aa)). 2 consecutive SIS domains span residues 284-423 (YEEL…INGY) and 455-596 (LSEK…PDKP). Catalysis depends on lysine 601, which acts as the For Fru-6P isomerization activity.

As to quaternary structure, homodimer.

It localises to the cytoplasm. The catalysed reaction is D-fructose 6-phosphate + L-glutamine = D-glucosamine 6-phosphate + L-glutamate. Catalyzes the first step in hexosamine metabolism, converting fructose-6P into glucosamine-6P using glutamine as a nitrogen source. The protein is Glutamine--fructose-6-phosphate aminotransferase [isomerizing] of Thermotoga maritima (strain ATCC 43589 / DSM 3109 / JCM 10099 / NBRC 100826 / MSB8).